A 92-amino-acid chain; its full sequence is Small ribosomal subunit protein uS19 (92 aa).

This sequence belongs to the universal ribosomal protein uS19 family.

Protein S19 forms a complex with S13 that binds strongly to the 16S ribosomal RNA. This Paramagnetospirillum magneticum (strain ATCC 700264 / AMB-1) (Magnetospirillum magneticum) protein is Small ribosomal subunit protein uS19.